An 88-amino-acid polypeptide reads, in one-letter code: Putative membrane protein insertion efficiency factor (88 aa).

The segment at 66-88 (DFVPPKKEKNADSEHSCKAHHHH) is disordered. The span at 69–82 (PPKKEKNADSEHSC) shows a compositional bias: basic and acidic residues.

This sequence belongs to the UPF0161 family.

It localises to the cell membrane. Functionally, could be involved in insertion of integral membrane proteins into the membrane. The chain is Putative membrane protein insertion efficiency factor from Listeria monocytogenes serotype 4b (strain CLIP80459).